We begin with the raw amino-acid sequence, 244 residues long: tRNA (guanine-N(7)-)-methyltransferase (244 aa).

Positions 1–24 are disordered; the sequence is MTDSHVPHPESPAVEEGEERPHRR. Glu-74, Glu-99, Asp-126, and Asp-149 together coordinate S-adenosyl-L-methionine. Asp-149 is an active-site residue. Residues Lys-153, Asp-185, and 222–225 contribute to the substrate site; that span reads TKFE.

It belongs to the class I-like SAM-binding methyltransferase superfamily. TrmB family.

It carries out the reaction guanosine(46) in tRNA + S-adenosyl-L-methionine = N(7)-methylguanosine(46) in tRNA + S-adenosyl-L-homocysteine. Its pathway is tRNA modification; N(7)-methylguanine-tRNA biosynthesis. Catalyzes the formation of N(7)-methylguanine at position 46 (m7G46) in tRNA. The protein is tRNA (guanine-N(7)-)-methyltransferase of Pseudomonas syringae pv. syringae (strain B728a).